The sequence spans 211 residues: Bcl-2 homologous antagonist/killer (211 aa).

The tract at residues 1–28 (MASGQGPGPPRQECGEPALPSASEEQVA) is disordered. Residue Ala2 is modified to N-acetylalanine. The BH3 signature appears at 74-88 (VGRQLAIIGDDINRR). Residues 117 to 136 (SLFESGINWGRVVALLGFGY) carry the BH1 motif. Residues Asp160 and His164 each coordinate Zn(2+). The BH2 signature appears at 169–184 (RWIAQRGGWVAALNLG). Residues 188-205 (ILNVLVVLGVVLLGQFVV) traverse the membrane as a helical segment.

This sequence belongs to the Bcl-2 family. Homodimer. Formation of the homodimer is zinc-dependent. Forms heterodimers with BCL2 and BCL2L1 isoform Bcl-X(L). Forms heterooligomers with BAX. Interacts with BCL2A1. Interacts with RTL10/BOP. Interacts with VDAC1. Interacts with GIMAP3/IAN4 and GIMAP5/IAN5. In terms of assembly, (Microbial infection) Interacts with vaccinia virus protein F1. As to quaternary structure, (Microbial infection) Interacts with myxoma virus protein M11L. (Microbial infection) Interacts with Epstein-Barr virus protein BALF1. In terms of assembly, (Microbial infection) Interacts with adenovirus protein E1B 19K. As to expression, expressed in a wide variety of tissues, with highest levels in the heart and skeletal muscle.

It is found in the mitochondrion outer membrane. Its function is as follows. Plays a role in the mitochondrial apoptotic process. Upon arrival of cell death signals, promotes mitochondrial outer membrane (MOM) permeabilization by oligomerizing to form pores within the MOM. This releases apoptogenic factors into the cytosol, including cytochrome c, promoting the activation of caspase 9 which in turn processes and activates the effector caspases. The chain is Bcl-2 homologous antagonist/killer (BAK1) from Homo sapiens (Human).